A 236-amino-acid chain; its full sequence is Small ribosomal subunit protein uS5 (236 aa).

Residues 61–124 (ENQEILDIAL…NYAKLNIIEI (64 aa)) form the S5 DRBM domain.

The protein belongs to the universal ribosomal protein uS5 family. Part of the 30S ribosomal subunit. Contacts protein S4.

With S4 and S12 plays an important role in translational accuracy. The polypeptide is Small ribosomal subunit protein uS5 (Pyrococcus abyssi (strain GE5 / Orsay)).